A 103-amino-acid polypeptide reads, in one-letter code: NADH dehydrogenase [ubiquinone] 1 beta subcomplex subunit 7 (103 aa).

The CHCH domain occupies 27–69; the sequence is RDMCAHLLIPLNKCRQAEFYLPWKCEDERHVYEKCEYELVMER. 2 short sequence motifs (cx9C motif) span residues 30 to 40 and 51 to 61; these read CAHLLIPLNKC and CEDERHVYEKC. 2 disulfides stabilise this stretch: Cys30–Cys61 and Cys40–Cys51.

The protein belongs to the complex I NDUFB7 subunit family. In terms of assembly, complex I is composed of at least 49 different subunits.

The protein resides in the mitochondrion. It is found in the mitochondrion inner membrane. The protein localises to the mitochondrion intermembrane space. In terms of biological role, accessory subunit of the mitochondrial membrane respiratory chain NADH dehydrogenase (Complex I), that is believed not to be involved in catalysis. Complex I functions in the transfer of electrons from NADH to the respiratory chain. The immediate electron acceptor for the enzyme is believed to be ubiquinone. The protein is NADH dehydrogenase [ubiquinone] 1 beta subcomplex subunit 7 of Arabidopsis thaliana (Mouse-ear cress).